The following is a 221-amino-acid chain: Alpha-ketoglutarate-dependent dioxygenase alkB homolog 7, mitochondrial (221 aa).

A mitochondrion-targeting transit peptide spans 1–23; it reads MAGGGQVVLRTLSQQGWVRGSGA. The Fe cation site is built by H121 and D123. A 2-oxoglutarate-binding site is contributed by Y165. H177 is a Fe cation binding site. 2-oxoglutarate contacts are provided by residues 197-199 and R203; that span reads RIS.

Belongs to the alkB family. Fe(2+) is required as a cofactor.

The protein resides in the mitochondrion matrix. May function as protein hydroxylase; can catalyze auto-hydroxylation at Leu-110 (in vitro), but this activity may be due to the absence of the true substrate. Required to induce programmed necrosis in response to DNA damage caused by cytotoxic alkylating agents. Acts by triggering the collapse of mitochondrial membrane potential and loss of mitochondrial function that leads to energy depletion and cell death. ALKBH7-mediated necrosis is probably required to prevent the accumulation of cells with DNA damage. Does not display DNA demethylase activity. Involved in fatty acid metabolism. This Bos taurus (Bovine) protein is Alpha-ketoglutarate-dependent dioxygenase alkB homolog 7, mitochondrial (ALKBH7).